A 266-amino-acid chain; its full sequence is Phosphonates import ATP-binding protein PhnC (266 aa).

An ABC transporter domain is found at 2–246; it reads IEIKNVSKTY…KFAEIYGRPI (245 aa). ATP is bound at residue 35 to 42; that stretch reads GLSGAGKS.

The protein belongs to the ABC transporter superfamily. Phosphonates importer (TC 3.A.1.9.1) family. As to quaternary structure, the complex is composed of two ATP-binding proteins (PhnC), two transmembrane proteins (PhnE) and a solute-binding protein (PhnD).

The protein resides in the cell membrane. The enzyme catalyses phosphonate(out) + ATP + H2O = phosphonate(in) + ADP + phosphate + H(+). Functionally, part of the ABC transporter complex PhnCDE involved in phosphonates import. Responsible for energy coupling to the transport system. The protein is Phosphonates import ATP-binding protein PhnC of Shouchella clausii (strain KSM-K16) (Alkalihalobacillus clausii).